The chain runs to 854 residues: MTVQTVKILSELVSTPVDKLLAQMKDAGLPQTSASQEVSEVEKQVLLSYLKRQHGEEGDNSQRITLQRKTTSTLSRDGGKAVNVAVKKKRTYVKRDDEEAQKQEELAKRLAEEQERLAQEKARLELERKQEEEKAAKAKAEAEEKARQEAAVKNVVADAGAVNETEQYVSDTGAAEPVESPKQPKASKKVSQPAMDSKKSTVAPKGKKGPVRHDNDKDKDKPRGRVNPDNKRTSRVNVNDEDEFTRRGKLGRKNKKPSKQEHGFQKPTAKMIHEVALPESITVADLAEKMAVKGAEVIKIMFKMGAMATINQTIDRDTATLVVEEMGHTVKFIDENAVENDMIEAIDYQGEAIKRAPVVTVMGHVDHGKTSLLDYIRTTRVAAGESGGITQHIGAYHVETPHGMISFLDTPGHAAFTSMRARGAKATDIVILVCAADDGVMPQTIEAIQHARAAGVPMVVAMTKIDKEGADIDRVKNELVAQEVVPEEWGGDIQFVGVSAKSGEGIEALLEAVLLQAEVLELTAVPSAPAKGVVVEARLDRGRGSVATLLVQNGTLKKGDIVLAGLQMGRVRALLDETGKAIDSAGPSIPVEILGLDGTPEAGEEFIVVADERKAREVANFRQGKYREVRFARQHSAKLENLFSEMGKDEVRTLNVVLKADVRGSLEALIKSLTDMNTDEVKVNVVSSGVGGITETDATLALASDAVIFGFNVRADNSAKQFIERESIDLRYYSVIYNIIDDVKSALSGMLSPDLREDIKGTAEVRDVFRSPKFGLIAGCMVIEGTVYRNKQIRVLRDDVVIYEGELESLRRFKDAVNEVSRGMECGIGVKNYNDVKVGDKIEVFETVEVARTL.

Disordered stretches follow at residues 52-79 and 128-265; these read RQHG…RDGG and RKQE…HGFQ. The segment covering 61 to 75 has biased composition (polar residues); sequence SQRITLQRKTTSTLS. Basic and acidic residues-rich tracts occupy residues 128–150 and 211–232; these read RKQE…RQEA and VRHD…DNKR. Basic residues predominate over residues 247–257; sequence RGKLGRKNKKP. In terms of domain architecture, tr-type G spans 354 to 523; that stretch reads KRAPVVTVMG…LLQAEVLELT (170 aa). Residues 363-370 are G1; it reads GHVDHGKT. 363-370 provides a ligand contact to GTP; it reads GHVDHGKT. Residues 388–392 form a G2 region; the sequence is GITQH. Residues 409–412 are G3; the sequence is DTPG. Position 409-413 (409-413) interacts with GTP; it reads DTPGH. The G4 stretch occupies residues 463–466; that stretch reads TKID. The interval 499 to 501 is G5; sequence SAK.

The protein belongs to the TRAFAC class translation factor GTPase superfamily. Classic translation factor GTPase family. IF-2 subfamily.

It localises to the cytoplasm. In terms of biological role, one of the essential components for the initiation of protein synthesis. Protects formylmethionyl-tRNA from spontaneous hydrolysis and promotes its binding to the 30S ribosomal subunits. Also involved in the hydrolysis of GTP during the formation of the 70S ribosomal complex. The chain is Translation initiation factor IF-2 from Marinomonas sp. (strain MWYL1).